We begin with the raw amino-acid sequence, 491 residues long: Aspartyl/glutamyl-tRNA(Asn/Gln) amidotransferase subunit B (491 aa).

This sequence belongs to the GatB/GatE family. GatB subfamily. As to quaternary structure, heterotrimer of A, B and C subunits.

It catalyses the reaction L-glutamyl-tRNA(Gln) + L-glutamine + ATP + H2O = L-glutaminyl-tRNA(Gln) + L-glutamate + ADP + phosphate + H(+). The enzyme catalyses L-aspartyl-tRNA(Asn) + L-glutamine + ATP + H2O = L-asparaginyl-tRNA(Asn) + L-glutamate + ADP + phosphate + 2 H(+). Functionally, allows the formation of correctly charged Asn-tRNA(Asn) or Gln-tRNA(Gln) through the transamidation of misacylated Asp-tRNA(Asn) or Glu-tRNA(Gln) in organisms which lack either or both of asparaginyl-tRNA or glutaminyl-tRNA synthetases. The reaction takes place in the presence of glutamine and ATP through an activated phospho-Asp-tRNA(Asn) or phospho-Glu-tRNA(Gln). This Burkholderia cenocepacia (strain ATCC BAA-245 / DSM 16553 / LMG 16656 / NCTC 13227 / J2315 / CF5610) (Burkholderia cepacia (strain J2315)) protein is Aspartyl/glutamyl-tRNA(Asn/Gln) amidotransferase subunit B.